The primary structure comprises 134 residues: Prefoldin subunit 4 (134 aa).

Residue A2 is modified to N-acetylalanine. Residue S125 is modified to Phosphoserine.

Belongs to the prefoldin subunit beta family. As to quaternary structure, heterohexamer of two PFD-alpha type and four PFD-beta type subunits. Interacts with URI1; the interaction is phosphorylation-dependent and occurs in a growth-dependent manner.

It is found in the nucleus. Its subcellular location is the cytoplasm. It localises to the mitochondrion. Binds specifically to cytosolic chaperonin (c-CPN) and transfers target proteins to it. Binds to nascent polypeptide chain and promotes folding in an environment in which there are many competing pathways for nonnative proteins. The chain is Prefoldin subunit 4 (PFDN4) from Bos taurus (Bovine).